The following is a 314-amino-acid chain: Thymidylate synthase (314 aa).

DUMP contacts are provided by residues Arg21 and 176-177 (RR). The Nucleophile role is filled by Cys196. DUMP-binding positions include 216–219 (RSAD), Asn227, and 257–259 (HLY). Asp219 is a (6R)-5,10-methylene-5,6,7,8-tetrahydrofolate binding site. Residue Ser313 participates in (6R)-5,10-methylene-5,6,7,8-tetrahydrofolate binding.

This sequence belongs to the thymidylate synthase family. Bacterial-type ThyA subfamily. In terms of assembly, homodimer.

It is found in the cytoplasm. The catalysed reaction is dUMP + (6R)-5,10-methylene-5,6,7,8-tetrahydrofolate = 7,8-dihydrofolate + dTMP. It functions in the pathway pyrimidine metabolism; dTTP biosynthesis. Catalyzes the reductive methylation of 2'-deoxyuridine-5'-monophosphate (dUMP) to 2'-deoxythymidine-5'-monophosphate (dTMP) while utilizing 5,10-methylenetetrahydrofolate (mTHF) as the methyl donor and reductant in the reaction, yielding dihydrofolate (DHF) as a by-product. This enzymatic reaction provides an intracellular de novo source of dTMP, an essential precursor for DNA biosynthesis. The sequence is that of Thymidylate synthase from Listeria innocua serovar 6a (strain ATCC BAA-680 / CLIP 11262).